The sequence spans 140 residues: Nucleoside diphosphate kinase (140 aa).

Residues lysine 11, phenylalanine 59, arginine 87, threonine 93, arginine 104, and asparagine 114 each contribute to the ATP site. Histidine 117 serves as the catalytic Pros-phosphohistidine intermediate.

The protein belongs to the NDK family. Homotetramer. The cofactor is Mg(2+).

The protein localises to the cytoplasm. The enzyme catalyses a 2'-deoxyribonucleoside 5'-diphosphate + ATP = a 2'-deoxyribonucleoside 5'-triphosphate + ADP. It catalyses the reaction a ribonucleoside 5'-diphosphate + ATP = a ribonucleoside 5'-triphosphate + ADP. Functionally, major role in the synthesis of nucleoside triphosphates other than ATP. The ATP gamma phosphate is transferred to the NDP beta phosphate via a ping-pong mechanism, using a phosphorylated active-site intermediate. The chain is Nucleoside diphosphate kinase from Brucella melitensis biotype 1 (strain ATCC 23456 / CCUG 17765 / NCTC 10094 / 16M).